A 497-amino-acid chain; its full sequence is Acetyl-coenzyme A carboxylase carboxyl transferase subunit beta, chloroplastic (497 aa).

Positions 225–497 constitute a CoA carboxyltransferase N-terminal domain; it reads LWVQCENCYG…LHGFLPLNQD (273 aa). Residues Cys229, Cys232, Cys248, and Cys251 each contribute to the Zn(2+) site. The C4-type zinc finger occupies 229-251; the sequence is CENCYGLNYKKFFSSKMNICEYC.

The protein belongs to the AccD/PCCB family. In terms of assembly, acetyl-CoA carboxylase is a heterohexamer composed of biotin carboxyl carrier protein, biotin carboxylase and 2 subunits each of ACCase subunit alpha and ACCase plastid-coded subunit beta (accD). It depends on Zn(2+) as a cofactor.

It localises to the plastid. The protein resides in the chloroplast stroma. It catalyses the reaction N(6)-carboxybiotinyl-L-lysyl-[protein] + acetyl-CoA = N(6)-biotinyl-L-lysyl-[protein] + malonyl-CoA. It participates in lipid metabolism; malonyl-CoA biosynthesis; malonyl-CoA from acetyl-CoA: step 1/1. Functionally, component of the acetyl coenzyme A carboxylase (ACC) complex. Biotin carboxylase (BC) catalyzes the carboxylation of biotin on its carrier protein (BCCP) and then the CO(2) group is transferred by the transcarboxylase to acetyl-CoA to form malonyl-CoA. The polypeptide is Acetyl-coenzyme A carboxylase carboxyl transferase subunit beta, chloroplastic (Phalaenopsis aphrodite subsp. formosana (Moth orchid)).